We begin with the raw amino-acid sequence, 784 residues long: Melanoma-associated antigen D1 (784 aa).

Residues 41–67 (PTNQATAAASGPNASPQSSQPPSANEV) form a disordered region. The span at 47–65 (AAASGPNASPQSSQPPSAN) shows a compositional bias: low complexity. A Phosphotyrosine modification is found at tyrosine 97. Composition is skewed to polar residues over residues 195 to 214 (PTAE…TSQA), 232 to 246 (AQTS…NLES), 259 to 269 (NNLNVEESSSG), and 306 to 320 (LAWQ…QPAR). The segment at 195–339 (PTAETQTQNI…PARQTPPAWQ (145 aa)) is disordered. Repeat copies occupy residues 302 to 307 (WQTPLA), 308 to 313 (WQNPSG), 314 to 319 (WQNQPA), 338 to 343 (WQNPVA), 344 to 349 (WQNPVI), 350 to 355 (WPNPVI), 356 to 361 (WQNPVI), 362 to 367 (WPNPIV), 368 to 373 (WPGPVV), 374 to 379 (WPNPLA), 380 to 385 (WQNPPG), 386 to 391 (WQTPPG), 392 to 397 (WQTPPG), 398 to 403 (WQGPPD), 404 to 409 (WQGPPD), 410 to 415 (WPLPPD), 416 to 421 (WPLPPD), 422 to 427 (WPLPTD), and 428 to 433 (WPLPPD). The tract at residues 302-450 (WQTPLAWQNP…VPPDWQNLRP (149 aa)) is 22 X 6 AA tandem repeats of W-[PQ]-X-P-X-X. Residues 379 to 418 (AWQNPPGWQTPPGWQTPPGWQGPPDWQGPPDWPLPPDWPL) form a disordered region. Residues 383-403 (PPGWQTPPGWQTPPGWQGPPD) are compositionally biased toward low complexity. Over residues 404–418 (WQGPPDWPLPPDWPL) the composition is skewed to pro residues. Residues 434–438 (WIPTD) form a 20; approximate repeat. A run of 2 repeats spans residues 439–444 (WPVPPD) and 445–450 (WQNLRP). Residues 441-471 (VPPDWQNLRPSPNLRPSPNSRASQNLGASQP) form a disordered region. Low complexity predominate over residues 447-461 (NLRPSPNLRPSPNSR). The 199-residue stretch at 477–675 (LQERANKLVK…RDWTAQFMEA (199 aa)) folds into the MAGE domain.

Interacts with DLX5, DLX7 and MSX2 and forms homomultimers. Interacts with UNC5A. Interacts with TRIM28 and PJA1. Interacts with NGFR/p75NTR and RORA.

Its subcellular location is the cytoplasm. It is found in the cell membrane. The protein resides in the nucleus. Functionally, involved in the apoptotic response after nerve growth factor (NGF) binding in neuronal cells. Inhibits cell cycle progression, and facilitates NGFR-mediated apoptosis. May act as a regulator of the function of DLX family members. May enhance ubiquitin ligase activity of RING-type zinc finger-containing E3 ubiquitin-protein ligases. Proposed to act through recruitment and/or stabilization of the Ubl-conjugating enzyme (E2) at the E3:substrate complex. Plays a role in the circadian rhythm regulation. May act as RORA co-regulator, modulating the expression of core clock genes such as BMAL1 and NFIL3, induced, or NR1D1, repressed. The sequence is that of Melanoma-associated antigen D1 (MAGED1) from Sus scrofa (Pig).